A 113-amino-acid chain; its full sequence is Hydrogenase maturation factor HypA (113 aa).

Histidine 2 provides a ligand contact to Ni(2+). Zn(2+) contacts are provided by cysteine 73, cysteine 76, cysteine 89, and cysteine 92.

It belongs to the HypA/HybF family.

In terms of biological role, involved in the maturation of [NiFe] hydrogenases. Required for nickel insertion into the metal center of the hydrogenase. The polypeptide is Hydrogenase maturation factor HypA (Alkalilimnicola ehrlichii (strain ATCC BAA-1101 / DSM 17681 / MLHE-1)).